We begin with the raw amino-acid sequence, 103 residues long: ATP synthase F(0) complex subunit g, mitochondrial (103 aa).

Ala2 carries the post-translational modification N-acetylalanine. An N6-acetyllysine mark is found at Lys11, Lys24, Lys35, and Lys54.

In terms of assembly, component of the ATP synthase complex composed at least of ATP5F1A/subunit alpha, ATP5F1B/subunit beta, ATP5MC1/subunit c (homooctomer), MT-ATP6/subunit a, MT-ATP8/subunit 8, ATP5ME/subunit e, ATP5MF/subunit f, ATP5MG/subunit g, ATP5MK/subunit k, ATP5MJ/subunit j, ATP5F1C/subunit gamma, ATP5F1D/subunit delta, ATP5F1E/subunit epsilon, ATP5PF/subunit F6, ATP5PB/subunit b, ATP5PD/subunit d, ATP5PO/subunit OSCP. ATP synthase complex consists of a soluble F(1) head domain (subunits alpha(3) and beta(3)) - the catalytic core - and a membrane F(0) domain - the membrane proton channel (subunits c, a, 8, e, f, g, k and j). These two domains are linked by a central stalk (subunits gamma, delta, and epsilon) rotating inside the F1 region and a stationary peripheral stalk (subunits F6, b, d, and OSCP).

It localises to the mitochondrion. The protein localises to the mitochondrion inner membrane. Subunit g, of the mitochondrial membrane ATP synthase complex (F(1)F(0) ATP synthase or Complex V) that produces ATP from ADP in the presence of a proton gradient across the membrane which is generated by electron transport complexes of the respiratory chain. ATP synthase complex consist of a soluble F(1) head domain - the catalytic core - and a membrane F(1) domain - the membrane proton channel. These two domains are linked by a central stalk rotating inside the F(1) region and a stationary peripheral stalk. During catalysis, ATP synthesis in the catalytic domain of F(1) is coupled via a rotary mechanism of the central stalk subunits to proton translocation. In vivo, can only synthesize ATP although its ATP hydrolase activity can be activated artificially in vitro. Part of the complex F(0) domain. This chain is ATP synthase F(0) complex subunit g, mitochondrial, found in Bos taurus (Bovine).